A 580-amino-acid chain; its full sequence is Xylulose kinase (580 aa).

Substrate is bound by residues histidine 99, arginine 170, aspartate 280, and asparagine 281. ATP-binding positions include tryptophan 355, 441 to 442 (GA), and asparagine 445.

The protein belongs to the FGGY kinase family. As to quaternary structure, monomer.

The enzyme catalyses D-xylulose + ATP = D-xylulose 5-phosphate + ADP + H(+). Functionally, phosphorylates D-xylulose to produce D-xylulose 5-phosphate, a molecule that may play an important role in the regulation of glucose metabolism and lipogenesis. The protein is Xylulose kinase (XYLB) of Pongo abelii (Sumatran orangutan).